The chain runs to 48 residues: Large ribosomal subunit protein eL40 (48 aa).

The protein belongs to the eukaryotic ribosomal protein eL40 family.

This Methanospirillum hungatei JF-1 (strain ATCC 27890 / DSM 864 / NBRC 100397 / JF-1) protein is Large ribosomal subunit protein eL40.